The chain runs to 320 residues: Cytochrome f (320 aa).

The first 35 residues, 1 to 35 (MQTRNTFSWIKEEITRSISVSLMIYIITGASISNA), serve as a signal peptide directing secretion. Tyrosine 36, cysteine 56, cysteine 59, and histidine 60 together coordinate heme. A helical membrane pass occupies residues 286 to 306 (VQGLLFFLASIVFAQIFLVLK).

It belongs to the cytochrome f family. As to quaternary structure, the 4 large subunits of the cytochrome b6-f complex are cytochrome b6, subunit IV (17 kDa polypeptide, petD), cytochrome f and the Rieske protein, while the 4 small subunits are PetG, PetL, PetM and PetN. The complex functions as a dimer. Requires heme as cofactor.

The protein localises to the plastid. The protein resides in the chloroplast thylakoid membrane. Functionally, component of the cytochrome b6-f complex, which mediates electron transfer between photosystem II (PSII) and photosystem I (PSI), cyclic electron flow around PSI, and state transitions. In Gossypium barbadense (Sea Island cotton), this protein is Cytochrome f.